The chain runs to 342 residues: Prostasin (342 aa).

The signal sequence occupies residues 1 to 29 (MAPRVGLGLGQLEAVTILLLLGLLQSGIR). A propeptide spans 30–32 (ADG) (activation peptide). Cystine bridges form between cysteine 37–cysteine 154 and cysteine 70–cysteine 86. Residues 45–286 (ITGGGSAKPG…YASWIHHHVA (242 aa)) form the Peptidase S1 domain. Histidine 85 (charge relay system) is an active-site residue. The N-linked (GlcNAc...) asparagine glycan is linked to asparagine 110. Residue aspartate 134 is the Charge relay system of the active site. N-linked (GlcNAc...) asparagine glycosylation is present at asparagine 159. 3 disulfides stabilise this stretch: cysteine 168/cysteine 244, cysteine 201/cysteine 223, and cysteine 234/cysteine 262. The active-site Charge relay system is serine 238. A helical transmembrane segment spans residues 320–340 (LLRPVLFLPLGLTLGLLSLWL). The propeptide occupies 323 to 342 (PVLFLPLGLTLGLLSLWLEH).

It belongs to the peptidase S1 family. In terms of assembly, heterodimer of two chains, light and heavy, held by a disulfide bond.

It localises to the cell membrane. The protein localises to the secreted. The protein resides in the extracellular space. Its function is as follows. Possesses a trypsin-like cleavage specificity with a preference for poly-basic substrates. Stimulates epithelial sodium channel (ENaC) activity through activating cleavage of the gamma subunits (SCNN1G). In Mus musculus (Mouse), this protein is Prostasin (Prss8).